Here is an 819-residue protein sequence, read N- to C-terminus: MQSGHYNRRQSRRQRISSNTTDSPRHTHGTRYRSTNWYTHPPQILSNSETLVAVQELLNSEMDQDSSSDASDDFPGYALHHSTYNGSEQNTSTSRHENRIFKLTEREANEEININTDAIDDEGEAEEGEAEEDAIDDEGEAEEGEAEEDAIDDEGEAEEGEAEEDAIDDEGEAEEGEAEEGEAEEGEAEEDAIDDEGEAEEDAAEEDAIDDEGEAEEDYFSVSQVCSRDADEVYFTLDPEISYSTDLRIAKVMEPAVSKELNVSKRCVEPVTLTGSMLAHNGFDESWFAMRECTRREYITVQGLYDPIHLRYQFDTSRMTPPQILRTIPALPNMTLGELLLIFPIEFMAQPISIERILVEDVFLDRRASSKTHKYGPRWNSVYALPYNAGKMYVQHIPGFYDVSLRAVGQGTAIWHHMILSTAACAISNRISHGDGLGFLLDAAIRISANCIFLGRNDNFGVGDPCWLEDHLAGLPREAVPDVLQVTQLVLPNRGPTVAIMRGFFGALAYWPELRIAISEPSTSLVRYATGHMELAEWFLFSRTHSLKPQFTPTEREMLASFFTLYVTLGGGMLNWICRATAMYLAAPYHSRSAYIAVCESLPYYYIPVNSDLLCDLEVLLLGEVDLPTVCESYATIAHELTGYEAVRTAATNFMIEFADCYKESETDLMVSAYLGAVLLLQRVLGHANLLLLLLSGAALYGGCSIYIPRGILDAYNTLMLAASPLYAHQTLTSFWKDRDDAMQTLGIRPTTDVLPKEQDRIVQASPIEMNFRFVGLETIYPREQPIPSVDLAENLMQYRNEILGLDWKSVAMHLLRKY.

Residues 1–15 (MQSGHYNRRQSRRQR) show a composition bias toward basic residues. Disordered stretches follow at residues 1–42 (MQSG…THPP) and 58–221 (LNSE…DYFS). A Nuclear localization signal motif is present at residues 11-31 (SRRQRISSNTTDSPRHTHGTR). The span at 32-42 (YRSTNWYTHPP) shows a compositional bias: polar residues. Over residues 62-72 (MDQDSSSDASD) the composition is skewed to acidic residues. The segment covering 82–93 (STYNGSEQNTST) has biased composition (polar residues). Over residues 94–109 (SRHENRIFKLTEREAN) the composition is skewed to basic and acidic residues. Tandem repeats lie at residues 117 to 132 (DAID…EAEE), 133 to 148 (DAID…EAEE), 149 to 164 (DAID…EAEE), 165 to 190 (DAID…EAEE), and 191 to 206 (DAID…AAEE). The tract at residues 117 to 218 (DAIDDEGEAE…IDDEGEAEED (102 aa)) is 6 X 16 AA approximate tandem repeats. A compositionally biased stretch (acidic residues) spans 118-219 (AIDDEGEAEE…DDEGEAEEDY (102 aa)). One copy of the 1-6; truncated repeat lies at 207 to 218 (DAIDDEGEAEED). The Nuclear export signal motif lies at 785–807 (QPIPSVDLAENLMQYRNEILGLD).

Belongs to the alphaherpesvirinae HHV-1 UL47 family. In terms of assembly, interacts with US3 kinase. Interacts with ORF24 and ORF27; these interactions seem important for efficient virion nuclear egress. Interacts with ORF17/VHS. Interacts with ORF9. Phosphorylated by US3. This phosphorylation is required for proper nuclear localization.

It is found in the virion tegument. It localises to the host nucleus. The protein localises to the host cytoplasm. In terms of biological role, tegument protein that can bind to various RNA transcripts. Plays a role in the attenuation of selective viral and cellular mRNA degradation by modulating the activity of host shutoff RNase ORF17/VHS. Also plays a role in the primary envelopment of virions in the perinuclear space, probably by interacting with two nuclear egress proteins ORF24 and ORF27. This Varicella-zoster virus (strain Dumas) (HHV-3) protein is Tegument protein UL47 homolog.